A 942-amino-acid chain; its full sequence is Protein inturned (942 aa).

The span at 1-13 shows a compositional bias: basic and acidic residues; the sequence is MADPARRDPRGRA. Disordered stretches follow at residues 1–54 and 129–150; these read MADP…LEPE and PKRHHKKKSSNTGPVSILKHQS. Acidic residues predominate over residues 22–32; the sequence is SQEEEEEESDS. A compositionally biased stretch (low complexity) spans 33–48; sequence DAGASSLGSCSSASSD. Positions 138–150 are enriched in polar residues; that stretch reads SNTGPVSILKHQS. A PDZ domain is found at 189-267; sequence LVGVIHQTKW…PMQVKLTFEN (79 aa). Ser674 and Ser678 each carry phosphoserine. The tract at residues 707–752 is disordered; it reads KARKPSPSRIGGGREPGEGEENVGLSPHTTPDTVRKQRESEGSDDN.

Belongs to the inturned family. Component of the CPLANE (ciliogenesis and planar polarity effectors) complex, composed of INTU, FUZ and WDPCP. Interacts with CPLANE1. Interacts with NPHP4 and DAAM1; INTU is mediating the interaction between NPHP4 and DAAM1.

The protein localises to the cytoplasm. Its subcellular location is the cell surface. It localises to the cytoskeleton. It is found in the cilium basal body. The protein resides in the microtubule organizing center. The protein localises to the centrosome. Its subcellular location is the centriole. Plays a key role in ciliogenesis and embryonic development. Regulator of cilia formation by controlling the organization of the apical actin cytoskeleton and the positioning of the basal bodies at the apical cell surface, which in turn is essential for the normal orientation of elongating ciliary microtubules. Plays a key role in definition of cell polarity via its role in ciliogenesis but not via conversion extension. Has an indirect effect on hedgehog signaling. Proposed to function as core component of the CPLANE (ciliogenesis and planar polarity effectors) complex involved in the recruitment of peripheral IFT-A proteins to basal bodies. Required for recruitment of CPLANE2 to the mother centriole. Binds phosphatidylinositol 3-phosphate with highest affinity, followed by phosphatidylinositol 4-phosphate and phosphatidylinositol 5-phosphate. The protein is Protein inturned (Intu) of Rattus norvegicus (Rat).